The sequence spans 540 residues: CTP synthase (540 aa).

An amidoligase domain region spans residues 1 to 270 (MNNLTSTKFI…DTQILKHFNI (270 aa)). A CTP-binding site is contributed by Ser18. Ser18 is a UTP binding site. ATP is bound by residues 19 to 24 (SLGKGL) and Asp76. Mg(2+) contacts are provided by Asp76 and Glu144. CTP-binding positions include 151-153 (DIE), 191-196 (KTKPTQ), and Lys227. Residues 191-196 (KTKPTQ) and Lys227 contribute to the UTP site. Residues 295–537 (TIAIIGKYIK…VQASLNYQET (243 aa)) form the Glutamine amidotransferase type-1 domain. Gly356 contacts L-glutamine. Catalysis depends on Cys383, which acts as the Nucleophile; for glutamine hydrolysis. L-glutamine is bound by residues 384-387 (MGMQ), Glu407, and Arg462. Residues His510 and Glu512 contribute to the active site.

This sequence belongs to the CTP synthase family. In terms of assembly, homotetramer.

The catalysed reaction is UTP + L-glutamine + ATP + H2O = CTP + L-glutamate + ADP + phosphate + 2 H(+). The enzyme catalyses L-glutamine + H2O = L-glutamate + NH4(+). It carries out the reaction UTP + NH4(+) + ATP = CTP + ADP + phosphate + 2 H(+). Its pathway is pyrimidine metabolism; CTP biosynthesis via de novo pathway; CTP from UDP: step 2/2. Allosterically activated by GTP, when glutamine is the substrate; GTP has no effect on the reaction when ammonia is the substrate. The allosteric effector GTP functions by stabilizing the protein conformation that binds the tetrahedral intermediate(s) formed during glutamine hydrolysis. Inhibited by the product CTP, via allosteric rather than competitive inhibition. Catalyzes the ATP-dependent amination of UTP to CTP with either L-glutamine or ammonia as the source of nitrogen. Regulates intracellular CTP levels through interactions with the four ribonucleotide triphosphates. The sequence is that of CTP synthase from Ehrlichia ruminantium (strain Welgevonden).